A 449-amino-acid polypeptide reads, in one-letter code: Heterogeneous nuclear ribonucleoprotein H (449 aa).

An N-acetylmethionine; in Heterogeneous nuclear ribonucleoprotein H; alternate modification is found at Met-1. At Met-2 the chain carries N-acetylmethionine; in Heterogeneous nuclear ribonucleoprotein H, N-terminally processed. An RRM 1 domain is found at 11 to 90 (FVVKVRGLPW…RYVEVFKSNN (80 aa)). Ser-23 is subject to Phosphoserine. A Glycyl lysine isopeptide (Lys-Gly) (interchain with G-Cter in SUMO2) cross-link involves residue Lys-35. Phosphoserine occurs at positions 54 and 63. Glycyl lysine isopeptide (Lys-Gly) (interchain with G-Cter in SUMO2) cross-links involve residues Lys-87 and Lys-98. The region spanning 111-188 (GFVRLRGLPF…RYIEIFKSSR (78 aa)) is the RRM 2 domain. Arg-233 is modified (dimethylated arginine; alternate). Omega-N-methylarginine; alternate is present on Arg-233. The 1-1 repeat unit spans residues 234 to 249 (GAYGGGYGGYDDYNGY). Residues 234 to 433 (GAYGGGYGGY…YGGQSSMSGY (200 aa)) are 2 X 16 AA Gly-rich approximate repeats. At Tyr-246 the chain carries Phosphotyrosine. The RRM 3 domain occupies 289–364 (HCVHMRGLPY…RYVELFLNST (76 aa)). Ser-310 is subject to Phosphoserine. A run of 3 repeats spans residues 354–372 (HRYVELFLNSTAGASGGAY), 374–392 (HRYVELFLNSTAGASGGAY), and 418–433 (GGYGGGYGGQSSMSGY). Residues 354–392 (HRYVELFLNSTAGASGGAYEHRYVELFLNSTAGASGGAY) are 2 X 19 AA perfect repeats.

Part of a ternary complex containing FUBP2, PTBP1, PTBP2 and HNRNPH1. Identified in the spliceosome C complex. Interacts with IGF2BP1. Interacts with CUGBP1; the interaction is RNA-dependent. Interacts with MBNL1; the interaction in RNA-independent. As to expression, expressed ubiquitously.

The protein resides in the nucleus. Its subcellular location is the nucleoplasm. Functionally, this protein is a component of the heterogeneous nuclear ribonucleoprotein (hnRNP) complexes which provide the substrate for the processing events that pre-mRNAs undergo before becoming functional, translatable mRNAs in the cytoplasm. Mediates pre-mRNA alternative splicing regulation. Inhibits, together with CUGBP1, insulin receptor (IR) pre-mRNA exon 11 inclusion in myoblast. Binds to the IR RNA. Binds poly(RG). This chain is Heterogeneous nuclear ribonucleoprotein H (HNRNPH1), found in Homo sapiens (Human).